A 1008-amino-acid chain; its full sequence is Pre-mRNA-splicing factor SNU114 (1008 aa).

At Ser85 the chain carries Phosphoserine. The residue at position 88 (Thr88) is a Phosphothreonine. The tr-type G domain occupies 131–338 (ERIINVGVIG…SYYYAHSIPS (208 aa)). Residues 140-147 (GPLHSGKT) are G1. 140–147 (GPLHSGKT) is a GTP binding site. Positions 188-192 (GLSIK) are G2. Residues 214-217 (DAPG) form a G3 region. Residues 214–218 (DAPGH) and 268–271 (NKLD) contribute to the GTP site. Positions 268–271 (NKLD) are G4. Residues 315–317 (STK) are G5. Residues 504–536 (TSQSESRQKRQLHDISKTETSNEDEDEDDETPS) form a disordered region. Basic and acidic residues predominate over residues 509–520 (SRQKRQLHDISK). A compositionally biased stretch (acidic residues) spans 524–536 (SNEDEDEDDETPS).

It belongs to the TRAFAC class translation factor GTPase superfamily. Classic translation factor GTPase family. EF-G/EF-2 subfamily. Belongs to the CWC complex (or CEF1-associated complex), a spliceosome sub-complex reminiscent of a late-stage spliceosome composed of the U2, U5 and U6 snRNAs and at least BUD13, BUD31, BRR2, CDC40, CEF1, CLF1, CUS1, CWC2, CWC15, CWC21, CWC22, CWC23, CWC24, CWC25, CWC27, ECM2, HSH155, IST3, ISY1, LEA1, MSL1, NTC20, PRP8, PRP9, PRP11, PRP19, PRP21, PRP22, PRP45, PRP46, SLU7, SMB1, SMD1, SMD2, SMD3, SMX2, SMX3, SNT309, SNU114, SPP2, SYF1, SYF2, RSE1 and YJU2. Component of the U4/U6-U5 tri-snRNP complex composed of the U4, U6 and U5 snRNAs and at least PRP3, PRP4, PRP6, PRP8, PRP18, PRP31, PRP38, SNU13, SNU23, SNU66, SNU114, SPP381, SMB1, SMD1, SMD2, SMD3, SMX2, SMX3, LSM2, LSM3, LSM4, LSM5, LSM6, LSM7, LSM8, BRR2 and DIB1. Interacts (via C-terminus) with CWC21. Interacts (via N-terminus) with PRP8 (via SCwid domain).

It localises to the nucleus. Component of the U5 snRNP complex required for pre-mRNA splicing. Binds GTP. This chain is Pre-mRNA-splicing factor SNU114 (SNU114), found in Saccharomyces cerevisiae (strain ATCC 204508 / S288c) (Baker's yeast).